Reading from the N-terminus, the 549-residue chain is Glucose-6-phosphate isomerase (549 aa).

The active-site Proton donor is the Glu355. Active-site residues include His386 and Lys514.

This sequence belongs to the GPI family.

The protein resides in the cytoplasm. It carries out the reaction alpha-D-glucose 6-phosphate = beta-D-fructose 6-phosphate. It functions in the pathway carbohydrate biosynthesis; gluconeogenesis. Its pathway is carbohydrate degradation; glycolysis; D-glyceraldehyde 3-phosphate and glycerone phosphate from D-glucose: step 2/4. Catalyzes the reversible isomerization of glucose-6-phosphate to fructose-6-phosphate. This Klebsiella pneumoniae (strain 342) protein is Glucose-6-phosphate isomerase.